Here is a 25-residue protein sequence, read N- to C-terminus: GLVSSIGRALGGLLADVVKSKGQPA.

Expressed by the skin dorsal glands.

The protein localises to the secreted. Functionally, antibacterial peptide with narrow spectrum of activity. Active against the Gram-negative bacterium P.multocida (MIC=25 ug/ml). Inhibits the formation of NO by neuronal nitric oxide synthase with an IC(50) of 9 ug/ml. The polypeptide is Caerin 2.1 (Litoria peronii (Emerald spotted tree frog)).